Here is a 671-residue protein sequence, read N- to C-terminus: UvrABC system protein B (671 aa).

One can recognise a Helicase ATP-binding domain in the interval 26–414 (EGLENGLAHQ…GGDIIEQVVR (389 aa)). An ATP-binding site is contributed by 39 to 46 (GVTGSGKT). The Beta-hairpin motif lies at 92–115 (YYDYYQPEAYVPSSDTFIEKDASV). Positions 431–593 (QVDDLLSEIR…IIPQGLNKKI (163 aa)) constitute a Helicase C-terminal domain. The region spanning 631 to 666 (DQKIRELEAKMYTYAQNLEFEQAAELRDQVHQLRQQ) is the UVR domain.

It belongs to the UvrB family. In terms of assembly, forms a heterotetramer with UvrA during the search for lesions. Interacts with UvrC in an incision complex.

The protein localises to the cytoplasm. In terms of biological role, the UvrABC repair system catalyzes the recognition and processing of DNA lesions. A damage recognition complex composed of 2 UvrA and 2 UvrB subunits scans DNA for abnormalities. Upon binding of the UvrA(2)B(2) complex to a putative damaged site, the DNA wraps around one UvrB monomer. DNA wrap is dependent on ATP binding by UvrB and probably causes local melting of the DNA helix, facilitating insertion of UvrB beta-hairpin between the DNA strands. Then UvrB probes one DNA strand for the presence of a lesion. If a lesion is found the UvrA subunits dissociate and the UvrB-DNA preincision complex is formed. This complex is subsequently bound by UvrC and the second UvrB is released. If no lesion is found, the DNA wraps around the other UvrB subunit that will check the other stand for damage. This Yersinia pestis protein is UvrABC system protein B.